Here is a 148-residue protein sequence, read N- to C-terminus: Large ribosomal subunit protein bL19 (148 aa).

It belongs to the bacterial ribosomal protein bL19 family.

Its function is as follows. This protein is located at the 30S-50S ribosomal subunit interface and may play a role in the structure and function of the aminoacyl-tRNA binding site. This chain is Large ribosomal subunit protein bL19, found in Beijerinckia indica subsp. indica (strain ATCC 9039 / DSM 1715 / NCIMB 8712).